Reading from the N-terminus, the 226-residue chain is 3-dehydroquinate dehydratase (226 aa).

Residues 33-35 (ELR) and Arg65 contribute to the 3-dehydroquinate site. The active-site Proton donor/acceptor is His120. The Schiff-base intermediate with substrate role is filled by Lys147. 3-dehydroquinate contacts are provided by Arg186, Ser205, and Gln209.

This sequence belongs to the type-I 3-dehydroquinase family. As to quaternary structure, homodimer.

It catalyses the reaction 3-dehydroquinate = 3-dehydroshikimate + H2O. It participates in metabolic intermediate biosynthesis; chorismate biosynthesis; chorismate from D-erythrose 4-phosphate and phosphoenolpyruvate: step 3/7. Functionally, involved in the third step of the chorismate pathway, which leads to the biosynthesis of aromatic amino acids. Catalyzes the cis-dehydration of 3-dehydroquinate (DHQ) and introduces the first double bond of the aromatic ring to yield 3-dehydroshikimate. The sequence is that of 3-dehydroquinate dehydratase from Thermodesulfovibrio yellowstonii (strain ATCC 51303 / DSM 11347 / YP87).